The sequence spans 222 residues: Cytidylate kinase (222 aa).

11–19 lines the ATP pocket; that stretch reads GPTASGKGT.

It belongs to the cytidylate kinase family. Type 1 subfamily.

The protein resides in the cytoplasm. The catalysed reaction is CMP + ATP = CDP + ADP. It catalyses the reaction dCMP + ATP = dCDP + ADP. This Cupriavidus necator (strain ATCC 17699 / DSM 428 / KCTC 22496 / NCIMB 10442 / H16 / Stanier 337) (Ralstonia eutropha) protein is Cytidylate kinase.